Here is a 403-residue protein sequence, read N- to C-terminus: Indoleamine 2,3-dioxygenase 1 (403 aa).

Heme b is bound at residue His346. The disordered stretch occupies residues 360–381; it reads QQPKENKTSEDPSKLEAKGTGG. A compositionally biased stretch (basic and acidic residues) spans 363–376; that stretch reads KENKTSEDPSKLEA.

The protein belongs to the indoleamine 2,3-dioxygenase family. In terms of assembly, monomer. Heme b serves as cofactor. Expressed in mature dendritic cells located in lymphoid organs (including lymph nodes, spleen, tonsils, Peyers's patches, the gut lamina propria, and the thymic medulla), in some epithelial cells of the female genital tract, as well as in endothelial cells of term placenta and in lung parenchyma. Weakly or not expressed in most normal tissues, but mostly inducible in most tissues. Expressed in more than 50% of tumors, either by tumoral, stromal, or endothelial cells (expression in tumor is associated with a worse clinical outcome). Not overexpressed in tumor-draining lymph nodes.

The protein localises to the cytoplasm. The protein resides in the cytosol. The catalysed reaction is D-tryptophan + O2 = N-formyl-D-kynurenine. It carries out the reaction L-tryptophan + O2 = N-formyl-L-kynurenine. Its pathway is amino-acid degradation; L-tryptophan degradation via kynurenine pathway; L-kynurenine from L-tryptophan: step 1/2. Activity is inhibited by and MTH-trp (methylthiohydantoin-DL-tryptophan), modestly inhibited by L-1MT (1-methyl-L-tryptophan) but not D-1MT (1-methyl-D-tryptophan). Its function is as follows. Catalyzes the first and rate limiting step of the catabolism of the essential amino acid tryptophan along the kynurenine pathway. Involved in the peripheral immune tolerance, contributing to maintain homeostasis by preventing autoimmunity or immunopathology that would result from uncontrolled and overreacting immune responses. Tryptophan shortage inhibits T lymphocytes division and accumulation of tryptophan catabolites induces T-cell apoptosis and differentiation of regulatory T-cells. Acts as a suppressor of anti-tumor immunity. Limits the growth of intracellular pathogens by depriving tryptophan. Protects the fetus from maternal immune rejection. This Homo sapiens (Human) protein is Indoleamine 2,3-dioxygenase 1.